A 381-amino-acid chain; its full sequence is Homoserine O-succinyltransferase (381 aa).

Residues 45–360 (NAVLVCHALN…PHGHDAFLLD (316 aa)) enclose the AB hydrolase-1 domain. Ser-151 acts as the Nucleophile in catalysis. Arg-221 provides a ligand contact to substrate. Catalysis depends on residues Asp-321 and His-354. Residue Asp-355 coordinates substrate.

Belongs to the AB hydrolase superfamily. MetX family. In terms of assembly, homodimer.

The protein localises to the cytoplasm. It catalyses the reaction L-homoserine + succinyl-CoA = O-succinyl-L-homoserine + CoA. It functions in the pathway amino-acid biosynthesis; L-methionine biosynthesis via de novo pathway; O-succinyl-L-homoserine from L-homoserine: step 1/1. Transfers a succinyl group from succinyl-CoA to L-homoserine, forming succinyl-L-homoserine. This chain is Homoserine O-succinyltransferase, found in Burkholderia multivorans (strain ATCC 17616 / 249).